Reading from the N-terminus, the 477-residue chain is UDP-N-acetylmuramate--L-alanine ligase (477 aa).

Residue 122–128 coordinates ATP; the sequence is GTHGKTT.

The protein belongs to the MurCDEF family.

It is found in the cytoplasm. It carries out the reaction UDP-N-acetyl-alpha-D-muramate + L-alanine + ATP = UDP-N-acetyl-alpha-D-muramoyl-L-alanine + ADP + phosphate + H(+). It functions in the pathway cell wall biogenesis; peptidoglycan biosynthesis. Functionally, cell wall formation. In Xylella fastidiosa (strain 9a5c), this protein is UDP-N-acetylmuramate--L-alanine ligase.